A 270-amino-acid chain; its full sequence is Gap junction beta-3 protein (270 aa).

Residues 1–20 (MDWKTLQALLSGVNKYSTAF) are Cytoplasmic-facing. Residues 21–40 (GRIWLSVVFVFRVLVYVVAA) form a helical membrane-spanning segment. Topologically, residues 41–75 (ERVWGDEQKDFDCNTKQPGCTNVCYDNYFPISNIR) are extracellular. The chain crosses the membrane as a helical span at residues 76 to 98 (LWALQLIFVTCPSLLVILHVAYR). The Cytoplasmic portion of the chain corresponds to 99-126 (EERERRHRQKHGDQCAKLYDNAGKKHGG). Residues 127–149 (LWWTYLFSLIFKLIIEFLFLYLL) traverse the membrane as a helical segment. Over 150–187 (HTLWHGFNMPRLVQCANVAPCPNIVDCYIARPTEKKIF) the chain is Extracellular. Residues 188–210 (TYFMVGASAVCIVLTICELCYLI) form a helical membrane-spanning segment. Over 211–270 (CHRVLRGLHKDKPRGGCSPSSSASRASTCRCHHKLVEAGEVDPDPGNNKLQASAPNLTPI) the chain is Cytoplasmic. A disordered region spans residues 250–270 (EVDPDPGNNKLQASAPNLTPI). Residues 258-270 (NKLQASAPNLTPI) are compositionally biased toward polar residues.

The protein belongs to the connexin family. Beta-type (group I) subfamily. A connexon is composed of a hexamer of connexins. Interacts with CNST.

The protein localises to the cell membrane. Its subcellular location is the cell junction. It is found in the gap junction. In terms of biological role, one gap junction consists of a cluster of closely packed pairs of transmembrane channels, the connexons, through which materials of low MW diffuse from one cell to a neighboring cell. The protein is Gap junction beta-3 protein (GJB3) of Homo sapiens (Human).